We begin with the raw amino-acid sequence, 134 residues long: Small ribosomal subunit protein uS8c (134 aa).

The protein belongs to the universal ribosomal protein uS8 family. As to quaternary structure, part of the 30S ribosomal subunit.

The protein localises to the plastid. It is found in the chloroplast. Functionally, one of the primary rRNA binding proteins, it binds directly to 16S rRNA central domain where it helps coordinate assembly of the platform of the 30S subunit. The sequence is that of Small ribosomal subunit protein uS8c (rps8) from Chloranthus spicatus (Chulantree).